The sequence spans 895 residues: Alanine--tRNA ligase (895 aa).

Residues histidine 586, histidine 590, cysteine 690, and histidine 694 each contribute to the Zn(2+) site.

This sequence belongs to the class-II aminoacyl-tRNA synthetase family. Zn(2+) serves as cofactor.

It is found in the cytoplasm. The enzyme catalyses tRNA(Ala) + L-alanine + ATP = L-alanyl-tRNA(Ala) + AMP + diphosphate. Functionally, catalyzes the attachment of alanine to tRNA(Ala) in a two-step reaction: alanine is first activated by ATP to form Ala-AMP and then transferred to the acceptor end of tRNA(Ala). Also edits incorrectly charged Ser-tRNA(Ala) and Gly-tRNA(Ala) via its editing domain. This is Alanine--tRNA ligase from Korarchaeum cryptofilum (strain OPF8).